Reading from the N-terminus, the 176-residue chain is Ribosome rescue factor SmrB (176 aa).

A Smr domain is found at 93-168 (LDLHGYRQSE…GDAALLVLID (76 aa)).

The protein belongs to the SmrB family. In terms of assembly, associates with collided ribosomes, but not with correctly translating polysomes.

Acts as a ribosome collision sensor. Detects stalled/collided disomes (pairs of ribosomes where the leading ribosome is stalled and a second ribosome has collided with it) and endonucleolytically cleaves mRNA at the 5' boundary of the stalled ribosome. Stalled/collided disomes form a new interface (primarily via the 30S subunits) that binds SmrB. Cleaved mRNA becomes available for tmRNA ligation, leading to ribosomal subunit dissociation and rescue of stalled ribosomes. The polypeptide is Ribosome rescue factor SmrB (Shewanella putrefaciens (strain CN-32 / ATCC BAA-453)).